The sequence spans 314 residues: L-lactate dehydrogenase (314 aa).

Residues valine 17, aspartate 38, lysine 43, tyrosine 69, and 83 to 84 (GA) contribute to the NAD(+) site. Residues glutamine 86 and arginine 92 each contribute to the substrate site. Residues serine 105, 122 to 124 (ASN), and serine 147 each bind NAD(+). Position 124–127 (124–127 (NPVD)) interacts with substrate. Position 152–155 (152–155 (DSAR)) interacts with substrate. Beta-D-fructose 1,6-bisphosphate-binding residues include arginine 157 and histidine 172. Histidine 179 serves as the catalytic Proton acceptor. At tyrosine 223 the chain carries Phosphotyrosine. Residue threonine 232 participates in substrate binding.

It belongs to the LDH/MDH superfamily. LDH family. Homotetramer.

The protein resides in the cytoplasm. The catalysed reaction is (S)-lactate + NAD(+) = pyruvate + NADH + H(+). Its pathway is fermentation; pyruvate fermentation to lactate; (S)-lactate from pyruvate: step 1/1. Allosterically activated by fructose 1,6-bisphosphate (FBP). Functionally, catalyzes the conversion of lactate to pyruvate. This is L-lactate dehydrogenase from Corynebacterium glutamicum (strain ATCC 13032 / DSM 20300 / JCM 1318 / BCRC 11384 / CCUG 27702 / LMG 3730 / NBRC 12168 / NCIMB 10025 / NRRL B-2784 / 534).